The sequence spans 712 residues: Phosphoribosylformylglycinamidine synthase subunit PurL (712 aa).

H32 is a catalytic residue. Y35 serves as a coordination point for ATP. E76 contacts Mg(2+). Substrate-binding positions include 77–80 (SHNH) and R99. The active-site Proton acceptor is H78. D100 contacts Mg(2+). Q223 provides a ligand contact to substrate. Mg(2+) is bound at residue D251. Position 295–297 (295–297 (ESQ)) interacts with substrate. ATP is bound by residues D470 and G507. Mg(2+) is bound at residue N508. S510 contributes to the substrate binding site.

It belongs to the FGAMS family. As to quaternary structure, monomer. Part of the FGAM synthase complex composed of 1 PurL, 1 PurQ and 2 PurS subunits.

The protein resides in the cytoplasm. The catalysed reaction is N(2)-formyl-N(1)-(5-phospho-beta-D-ribosyl)glycinamide + L-glutamine + ATP + H2O = 2-formamido-N(1)-(5-O-phospho-beta-D-ribosyl)acetamidine + L-glutamate + ADP + phosphate + H(+). It functions in the pathway purine metabolism; IMP biosynthesis via de novo pathway; 5-amino-1-(5-phospho-D-ribosyl)imidazole from N(2)-formyl-N(1)-(5-phospho-D-ribosyl)glycinamide: step 1/2. Functionally, part of the phosphoribosylformylglycinamidine synthase complex involved in the purines biosynthetic pathway. Catalyzes the ATP-dependent conversion of formylglycinamide ribonucleotide (FGAR) and glutamine to yield formylglycinamidine ribonucleotide (FGAM) and glutamate. The FGAM synthase complex is composed of three subunits. PurQ produces an ammonia molecule by converting glutamine to glutamate. PurL transfers the ammonia molecule to FGAR to form FGAM in an ATP-dependent manner. PurS interacts with PurQ and PurL and is thought to assist in the transfer of the ammonia molecule from PurQ to PurL. This chain is Phosphoribosylformylglycinamidine synthase subunit PurL, found in Thermococcus gammatolerans (strain DSM 15229 / JCM 11827 / EJ3).